The chain runs to 291 residues: uncharacterized protein (291 aa).

Disordered regions lie at residues 1-62 (MELR…SSKK), 220-242 (PLPASRPSLNLSPQKVPTGTDKV), and 255-291 (ENNKPHPRMRRRSDNPATNEYVRVFHLEKKEPKSRKK). The segment covering 18 to 41 (EPAKNKSERSIESNERVGTREAKS) has biased composition (basic and acidic residues). 2 stretches are compositionally biased toward polar residues: residues 42–58 (ENTSVFSPAYSDTATTD) and 226–236 (PSLNLSPQKVP). Position 267 is a phosphoserine (serine 267).

It localises to the cytoplasm. The protein resides in the nucleus. This is an uncharacterized protein from Saccharomyces cerevisiae (strain ATCC 204508 / S288c) (Baker's yeast).